The following is a 333-amino-acid chain: Complement C1q and tumor necrosis factor-related protein 9 (333 aa).

Positions 1 to 19 (MRIWWLLLVMGACTRSVFS) are cleaved as a signal peptide. The disordered stretch occupies residues 22-194 (TCRQGHSGIP…GDRGEKGKVG (173 aa)). 3 Collagen-like domains span residues 24-82 (RQGH…DGRV), 84-130 (AKGI…KGEV), and 134-193 (GPEG…KGKV). 4-hydroxyproline occurs at positions 31, 34, and 40. Residues 42–57 (RDGRDGAKGDKGDAGE) are compositionally biased toward basic and acidic residues. 4-hydroxyproline is present on residues Pro-58, Pro-61, and Pro-64. Basic and acidic residues predominate over residues 67–88 (DGIRGEKGEPGADGRVEAKGIK). Lys-73 is subject to 5-hydroxylysine. Lys-73 carries O-linked (Gal...) hydroxylysine glycosylation. Pro-76 and Pro-115 each carry 4-hydroxyproline. A 5-hydroxylysine modification is found at Lys-127. A glycan (O-linked (Gal...) hydroxylysine) is linked at Lys-127. 4-hydroxyproline occurs at positions 151, 160, and 175. The segment covering 183–193 (WKGDRGEKGKV) has biased composition (basic and acidic residues). One can recognise a C1q domain in the interval 197 to 333 (PLVPKSAFTV…FTGFLLFSSS (137 aa)).

In terms of assembly, multimers (predominantly trimers). Interacts with ADIPOQ via the C1q domain to form a heterotrimeric complex. Post-translationally, the isomeric forms of the hydroxylated amino acids could not be determined in the mass-spectrometric methods reported in PubMed:18787108 but are assumed on the basis of their occurrence in collagen-like domains. As to expression, expressed predominantly in adipose tissue. Females express higher levels than males.

It is found in the secreted. In terms of biological role, probable adipokine. Activates AMPK, AKT, and p44/42 MAPK signaling pathways. In Mus musculus (Mouse), this protein is Complement C1q and tumor necrosis factor-related protein 9 (C1qtnf9).